The sequence spans 310 residues: GPN-loop GTPase 2 (310 aa).

N-acetylalanine is present on alanine 2. 19–24 (GSGKTT) is a GTP binding site. Positions 76-78 (GPN) match the Gly-Pro-Asn (GPN)-loop; involved in dimer interface motif. 178-181 (SKMD) contributes to the GTP binding site.

The protein belongs to the GPN-loop GTPase family. As to quaternary structure, heterodimers with GPN1 or GPN3. Binds to RNA polymerase II (RNAPII).

Functionally, small GTPase required for proper localization of RNA polymerase II and III (RNAPII and RNAPIII). May act at an RNAP assembly step prior to nuclear import. In Bos taurus (Bovine), this protein is GPN-loop GTPase 2 (GPN2).